The sequence spans 84 residues: Esculentin-1ISb (84 aa).

The first 22 residues, 1–22, serve as a signal peptide directing secretion; it reads MFTLKKPLLLIVLLGIISLSLC. Residues 23–36 constitute a propeptide, removed in mature form; it reads EQERAADEDEGTKI. A disulfide bond links Cys-78 and Cys-84.

Expressed by the skin glands.

It localises to the secreted. Functionally, has antimicrobial activity against Gram-negative bacterium E.coli ATCC 8739 (MIC=3.1 ug), against Gram positive bacteria S.aureus ATCC 6538 (MIC=3.1 ug), methicillin-resistant S.aureus ATCC 43300 (MIC=12.5 ug), B.subtilis ATCC 6633 (MIC=12.5 ug) and against fungus C.albicans ATCC 90028 (MIC=50 ug). The sequence is that of Esculentin-1ISb from Odorrana ishikawae (Ishikawa's frog).